Consider the following 21-residue polypeptide: Glutathione S-transferase 1 (21 aa).

Belongs to the GST superfamily. Phi family.

The enzyme catalyses RX + glutathione = an S-substituted glutathione + a halide anion + H(+). Functionally, conjugation of reduced glutathione to a wide number of exogenous and endogenous hydrophobic electrophiles. In plants, may have a detoxification role against certain herbicides. The sequence is that of Glutathione S-transferase 1 from Populus euphratica (Euphrates poplar).